The following is a 156-amino-acid chain: ATP synthase subunit b (156 aa).

The chain crosses the membrane as a helical span at residues 7–29 (LFAQMVVFLVLAWFTMKFVWPPL).

The protein belongs to the ATPase B chain family. In terms of assembly, F-type ATPases have 2 components, F(1) - the catalytic core - and F(0) - the membrane proton channel. F(1) has five subunits: alpha(3), beta(3), gamma(1), delta(1), epsilon(1). F(0) has three main subunits: a(1), b(2) and c(10-14). The alpha and beta chains form an alternating ring which encloses part of the gamma chain. F(1) is attached to F(0) by a central stalk formed by the gamma and epsilon chains, while a peripheral stalk is formed by the delta and b chains.

Its subcellular location is the cell inner membrane. In terms of biological role, f(1)F(0) ATP synthase produces ATP from ADP in the presence of a proton or sodium gradient. F-type ATPases consist of two structural domains, F(1) containing the extramembraneous catalytic core and F(0) containing the membrane proton channel, linked together by a central stalk and a peripheral stalk. During catalysis, ATP synthesis in the catalytic domain of F(1) is coupled via a rotary mechanism of the central stalk subunits to proton translocation. Its function is as follows. Component of the F(0) channel, it forms part of the peripheral stalk, linking F(1) to F(0). This is ATP synthase subunit b from Burkholderia ambifaria (strain MC40-6).